The sequence spans 323 residues: tRNA U34 carboxymethyltransferase (323 aa).

Residues Lys91, Trp105, Lys110, Gly130, 181-182 (IE), Met196, Tyr200, and Arg315 each bind carboxy-S-adenosyl-L-methionine.

Belongs to the class I-like SAM-binding methyltransferase superfamily. CmoB family. As to quaternary structure, homotetramer.

The enzyme catalyses carboxy-S-adenosyl-L-methionine + 5-hydroxyuridine(34) in tRNA = 5-carboxymethoxyuridine(34) in tRNA + S-adenosyl-L-homocysteine + H(+). Catalyzes carboxymethyl transfer from carboxy-S-adenosyl-L-methionine (Cx-SAM) to 5-hydroxyuridine (ho5U) to form 5-carboxymethoxyuridine (cmo5U) at position 34 in tRNAs. In Yersinia pseudotuberculosis serotype O:3 (strain YPIII), this protein is tRNA U34 carboxymethyltransferase.